A 137-amino-acid chain; its full sequence is Protein E6 (137 aa).

Zinc fingers lie at residues 17-53 (CVWCREPLTEVDAFRCMIKDFHVVYRDGVKFGACTTC) and 90-127 (CCYCGGKLTKNEKQRHVLYNEPFCKTRSNIIRGRCYDC).

Belongs to the papillomaviridae E6 protein family. As to quaternary structure, forms homodimers. Interacts with ubiquitin-protein ligase UBE3A/E6-AP; this interaction stimulates UBE3A ubiquitin activity. Interacts with host BAK1.

It localises to the host cytoplasm. The protein localises to the host nucleus. Functionally, plays a major role in the induction and maintenance of cellular transformation. E6 associates with host UBE3A/E6-AP ubiquitin-protein ligase and modulates its activity. Protects host keratinocytes from apoptosis by mediating the degradation of host BAK1. May also inhibit host immune response. This Bos taurus (Bovine) protein is Protein E6.